The following is an 89-amino-acid chain: Small ribosomal subunit protein uS15 (89 aa).

Belongs to the universal ribosomal protein uS15 family. In terms of assembly, part of the 30S ribosomal subunit. Forms a bridge to the 50S subunit in the 70S ribosome, contacting the 23S rRNA.

In terms of biological role, one of the primary rRNA binding proteins, it binds directly to 16S rRNA where it helps nucleate assembly of the platform of the 30S subunit by binding and bridging several RNA helices of the 16S rRNA. Its function is as follows. Forms an intersubunit bridge (bridge B4) with the 23S rRNA of the 50S subunit in the ribosome. The chain is Small ribosomal subunit protein uS15 from Xanthobacter autotrophicus (strain ATCC BAA-1158 / Py2).